Consider the following 300-residue polypeptide: GTP-binding protein At2g22870 (300 aa).

The 179-residue stretch at 119–297 (DRPEIAILGR…LLHMSQLRNY (179 aa)) folds into the EngB-type G domain. Residues 127 to 134 (GRSNVGKS), 154 to 158 (GKTQL), 172 to 175 (DLPG), 239 to 242 (TKCD), and 276 to 278 (TSS) each bind GTP. Positions 134 and 156 each coordinate Mg(2+).

This sequence belongs to the TRAFAC class TrmE-Era-EngA-EngB-Septin-like GTPase superfamily. EngB GTPase family. Mg(2+) serves as cofactor.

In Arabidopsis thaliana (Mouse-ear cress), this protein is GTP-binding protein At2g22870 (EMB2001).